A 147-amino-acid chain; its full sequence is Hemoglobin subunit beta-1 (147 aa).

Valine 2 bears the N-acetylvaline mark. Positions 3–147 (HLTDAEKAAV…VASALAHKYH (145 aa)) constitute a Globin domain. Lysine 18 is subject to N6-succinyllysine. Serine 45, serine 51, and serine 53 each carry phosphoserine. Lysine 60 is subject to N6-succinyllysine. The heme b site is built by histidine 64 and histidine 93. Arginine 105 is modified (asymmetric dimethylarginine). At threonine 124 the chain carries Phosphothreonine.

The protein belongs to the globin family. Heterotetramer of two alpha chains and two beta chains. As to expression, red blood cells.

Its function is as follows. Involved in oxygen transport from the lung to the various peripheral tissues. The protein is Hemoglobin subunit beta-1 (Hbb) of Rattus norvegicus (Rat).